The primary structure comprises 297 residues: 4-diphosphocytidyl-2-C-methyl-D-erythritol kinase (297 aa).

The active site involves lysine 14. Residue 99–109 (PVAAGIGGGSA) participates in ATP binding. Residue aspartate 141 is part of the active site.

Belongs to the GHMP kinase family. IspE subfamily.

It carries out the reaction 4-CDP-2-C-methyl-D-erythritol + ATP = 4-CDP-2-C-methyl-D-erythritol 2-phosphate + ADP + H(+). It participates in isoprenoid biosynthesis; isopentenyl diphosphate biosynthesis via DXP pathway; isopentenyl diphosphate from 1-deoxy-D-xylulose 5-phosphate: step 3/6. In terms of biological role, catalyzes the phosphorylation of the position 2 hydroxy group of 4-diphosphocytidyl-2C-methyl-D-erythritol. In Bradyrhizobium diazoefficiens (strain JCM 10833 / BCRC 13528 / IAM 13628 / NBRC 14792 / USDA 110), this protein is 4-diphosphocytidyl-2-C-methyl-D-erythritol kinase.